A 266-amino-acid chain; its full sequence is Glucosamine-6-phosphate deaminase (266 aa).

Residue Asp-72 is the Proton acceptor; for enolization step of the active site. Asp-141 serves as the catalytic For ring-opening step. Catalysis depends on His-143, which acts as the Proton acceptor; for ring-opening step. Glu-148 functions as the For ring-opening step in the catalytic mechanism.

The protein belongs to the glucosamine/galactosamine-6-phosphate isomerase family. NagB subfamily. In terms of assembly, homohexamer.

It catalyses the reaction alpha-D-glucosamine 6-phosphate + H2O = beta-D-fructose 6-phosphate + NH4(+). Its pathway is amino-sugar metabolism; N-acetylneuraminate degradation; D-fructose 6-phosphate from N-acetylneuraminate: step 5/5. With respect to regulation, allosterically activated by N-acetylglucosamine 6-phosphate (GlcNAc6P). Catalyzes the reversible isomerization-deamination of glucosamine 6-phosphate (GlcN6P) to form fructose 6-phosphate (Fru6P) and ammonium ion. This chain is Glucosamine-6-phosphate deaminase, found in Klebsiella pneumoniae (strain 342).